The following is a 370-amino-acid chain: Quinolinate synthase (370 aa).

His-62 and Ser-83 together coordinate iminosuccinate. Cys-128 contributes to the [4Fe-4S] cluster binding site. Residues Tyr-154–Asn-156 and Ser-171 contribute to the iminosuccinate site. Position 215 (Cys-215) interacts with [4Fe-4S] cluster. Iminosuccinate-binding positions include His-241 to Glu-243 and Thr-258. Cys-312 lines the [4Fe-4S] cluster pocket.

Belongs to the quinolinate synthase family. Type 1 subfamily. The cofactor is [4Fe-4S] cluster.

The protein resides in the cytoplasm. It carries out the reaction iminosuccinate + dihydroxyacetone phosphate = quinolinate + phosphate + 2 H2O + H(+). It participates in cofactor biosynthesis; NAD(+) biosynthesis; quinolinate from iminoaspartate: step 1/1. Catalyzes the condensation of iminoaspartate with dihydroxyacetone phosphate to form quinolinate. The protein is Quinolinate synthase of Neisseria meningitidis serogroup A / serotype 4A (strain DSM 15465 / Z2491).